Here is a 172-residue protein sequence, read N- to C-terminus: L-methionine sulfoximine/L-methionine sulfone acetyltransferase (172 aa).

Positions 3-166 (ASIRDAGVAD…DLTFMQLNLD (164 aa)) constitute an N-acetyltransferase domain. Substrate contacts are provided by residues 75 to 77 (RPF) and 85 to 87 (EHS). Residues 88–90 (VYV), 96–101 (GKGLGV), and Asn127 each bind acetyl-CoA.

In terms of assembly, homodimer.

The enzyme catalyses L-methionine sulfoximine + acetyl-CoA = N-acetyl-L-methionine sulfoximine + CoA + H(+). It carries out the reaction L-methionine sulfone + acetyl-CoA = N-acetyl-L-methionine sulfone + CoA + H(+). Plays a role in the resistance against the toxic effects of L-methionine sulfoximine (MSX), a rare amino acid, which inhibits glutamine synthetase (GlnA). Catalyzes the acetylation of L-methionine sulfoximine (MSX). The chain is L-methionine sulfoximine/L-methionine sulfone acetyltransferase from Pseudomonas aeruginosa (strain ATCC 15692 / DSM 22644 / CIP 104116 / JCM 14847 / LMG 12228 / 1C / PRS 101 / PAO1).